Consider the following 309-residue polypeptide: Olfactory receptor 2AP1 (309 aa).

At 1–23 (MKNKTVLTEFILLGLTDVPELQV) the chain is on the extracellular side. Residue Asn3 is glycosylated (N-linked (GlcNAc...) asparagine). Residues 24–47 (AVFTFLFLAYLLSILGNLTILILT) form a helical membrane-spanning segment. The Cytoplasmic segment spans residues 48–55 (LLDSHLQT). The helical transmembrane segment at 56–77 (PMYFFLRNFSFLEISFTNIFIP) threads the bilayer. At 78–98 (RVLISITTGNKSISFAGCFTQ) the chain is on the extracellular side. An N-linked (GlcNAc...) asparagine glycan is attached at Asn87. Cys95 and Cys187 form a disulfide bridge. The chain crosses the membrane as a helical span at residues 99–118 (YFFAMFLGATEFYLLAAMSY). Topologically, residues 119–137 (DRYVAICKPLHYTTIMSSR) are cytoplasmic. A helical membrane pass occupies residues 138 to 156 (ICIQLIFCSWLGGLMAIIP). Residues 157 to 193 (TITLMSQQDFCASNRLNHYFCDYEPLLELSCSDTSLI) are Extracellular-facing. A helical transmembrane segment spans residues 194–217 (EKVVFLVASVTLVVTLVLVILSYA). Topologically, residues 218 to 234 (FIIKTILKLPSAQQRTK) are cytoplasmic. Residues 235 to 257 (AFSTCSSHMIVISLSYGSCMFMY) traverse the membrane as a helical segment. The Extracellular portion of the chain corresponds to 258-270 (INPSAKEGDTFNK). Residues 271–290 (GVALLITSVAPLLNPFIYTL) form a helical membrane-spanning segment. Over 291 to 309 (RNQQVKQPFKDMVKKLLNL) the chain is Cytoplasmic.

It belongs to the G-protein coupled receptor 1 family.

The protein resides in the cell membrane. In terms of biological role, odorant receptor. The polypeptide is Olfactory receptor 2AP1 (OR2AP1) (Homo sapiens (Human)).